Reading from the N-terminus, the 296-residue chain is 4-hydroxybenzoate octaprenyltransferase (296 aa).

Helical transmembrane passes span 28-48, 52-72, 102-122, 123-140, 146-166, 169-189, 219-239, 241-261, and 275-295; these read PIGI…AGKG, LNTV…GCVI, ALVL…FTNS, TTIW…CYPF, YYPQ…AFTA, GELP…TVGY, VIIL…GSRF, LGAF…WEFW, and FLHN…DYAL.

It belongs to the UbiA prenyltransferase family. Mg(2+) is required as a cofactor.

Its subcellular location is the cell inner membrane. The enzyme catalyses all-trans-octaprenyl diphosphate + 4-hydroxybenzoate = 4-hydroxy-3-(all-trans-octaprenyl)benzoate + diphosphate. It participates in cofactor biosynthesis; ubiquinone biosynthesis. Functionally, catalyzes the prenylation of para-hydroxybenzoate (PHB) with an all-trans polyprenyl group. Mediates the second step in the final reaction sequence of ubiquinone-8 (UQ-8) biosynthesis, which is the condensation of the polyisoprenoid side chain with PHB, generating the first membrane-bound Q intermediate 3-octaprenyl-4-hydroxybenzoate. The sequence is that of 4-hydroxybenzoate octaprenyltransferase from Pseudomonas syringae pv. tomato (strain ATCC BAA-871 / DC3000).